A 309-amino-acid chain; its full sequence is Porphobilinogen deaminase (309 aa).

Cys-241 is subject to S-(dipyrrolylmethanemethyl)cysteine.

This sequence belongs to the HMBS family. In terms of assembly, monomer. The cofactor is dipyrromethane.

The catalysed reaction is 4 porphobilinogen + H2O = hydroxymethylbilane + 4 NH4(+). Its pathway is porphyrin-containing compound metabolism; protoporphyrin-IX biosynthesis; coproporphyrinogen-III from 5-aminolevulinate: step 2/4. Its function is as follows. Tetrapolymerization of the monopyrrole PBG into the hydroxymethylbilane pre-uroporphyrinogen in several discrete steps. This Bacillus cereus (strain ATCC 10987 / NRS 248) protein is Porphobilinogen deaminase.